Consider the following 121-residue polypeptide: Small ribosomal subunit protein uS13 (121 aa).

The tract at residues 96–121 is disordered; it reads PVRGQNTKNNARTRKGKAVAIAGKKK. Over residues 106–121 the composition is skewed to basic residues; it reads ARTRKGKAVAIAGKKK.

It belongs to the universal ribosomal protein uS13 family. In terms of assembly, part of the 30S ribosomal subunit. Forms a loose heterodimer with protein S19. Forms two bridges to the 50S subunit in the 70S ribosome.

Located at the top of the head of the 30S subunit, it contacts several helices of the 16S rRNA. In the 70S ribosome it contacts the 23S rRNA (bridge B1a) and protein L5 of the 50S subunit (bridge B1b), connecting the 2 subunits; these bridges are implicated in subunit movement. Contacts the tRNAs in the A and P-sites. This chain is Small ribosomal subunit protein uS13, found in Streptococcus pyogenes serotype M3 (strain SSI-1).